The sequence spans 361 residues: Chorismate synthase (361 aa).

NADP(+)-binding residues include Arg48 and Arg54. FMN-binding positions include Arg125–Ser127, Asn238–Ala239, Gly278, Lys293–Ser297, and Arg319.

Belongs to the chorismate synthase family. As to quaternary structure, homotetramer. FMNH2 serves as cofactor.

The enzyme catalyses 5-O-(1-carboxyvinyl)-3-phosphoshikimate = chorismate + phosphate. It participates in metabolic intermediate biosynthesis; chorismate biosynthesis; chorismate from D-erythrose 4-phosphate and phosphoenolpyruvate: step 7/7. Functionally, catalyzes the anti-1,4-elimination of the C-3 phosphate and the C-6 proR hydrogen from 5-enolpyruvylshikimate-3-phosphate (EPSP) to yield chorismate, which is the branch point compound that serves as the starting substrate for the three terminal pathways of aromatic amino acid biosynthesis. This reaction introduces a second double bond into the aromatic ring system. This chain is Chorismate synthase, found in Salmonella dublin (strain CT_02021853).